The following is a 401-amino-acid chain: Argininosuccinate synthase (401 aa).

Ala9–Ser17 serves as a coordination point for ATP. Tyr86 is an L-citrulline binding site. Gly116 serves as a coordination point for ATP. 3 residues coordinate L-aspartate: Thr118, Asn122, and Asp123. Asn122 is a binding site for L-citrulline. Arg126, Ser174, Ser183, Glu259, and Tyr271 together coordinate L-citrulline.

This sequence belongs to the argininosuccinate synthase family. Type 1 subfamily. In terms of assembly, homotetramer.

The protein resides in the cytoplasm. The catalysed reaction is L-citrulline + L-aspartate + ATP = 2-(N(omega)-L-arginino)succinate + AMP + diphosphate + H(+). The protein operates within amino-acid biosynthesis; L-arginine biosynthesis; L-arginine from L-ornithine and carbamoyl phosphate: step 2/3. This is Argininosuccinate synthase from Bacillus cereus (strain AH820).